A 595-amino-acid polypeptide reads, in one-letter code: Tumor necrosis factor receptor superfamily member 8 (595 aa).

An N-terminal signal peptide occupies residues 1–18; the sequence is MRVLLAALGLLFLGALRA. Residues 19 to 385 lie on the Extracellular side of the membrane; the sequence is FPQDRPFEDT…STGKPVLDAG (367 aa). TNFR-Cys repeat units follow at residues 28–66, 68–106, and 107–150; these read TCHGNPSHYYDKAVRRCCYRCPMGLFPTQQCPQRPTDCR, QCEPDYYLDEADRCTACVTCSRDDLVEKTPCAWNSSRVC, and ECRP…TVCE. 8 disulfides stabilise this stretch: C29–C44, C45–C58, C48–C65, C69–C81, C84–C98, C87–C106, C108–C122, and C131–C149. Residue N32 is glycosylated (N-linked (GlcNAc...) asparagine). N101 carries N-linked (GlcNAc...) asparagine glycosylation. The segment at 167 to 238 is disordered; the sequence is KEPSSGTIPQ…PTQPCPEGSG (72 aa). The span at 179–194 shows a compositional bias: low complexity; it reads PTPVSPATSSASTMPV. TNFR-Cys repeat units lie at residues 205–241, 243–281, and 282–325; these read ASKLTRAPDSPSSVGRPSSDPGLSPTQPCPEGSGDCR, QCEPDYYLDEAGRCTACVSCSRDDLVEKTPCAWNSSRTC, and ECRP…TTFE. Cystine bridges form between C233–C240, C244–C256, C259–C273, C262–C281, C283–C297, and C289–C300. N-linked (GlcNAc...) asparagine glycosylation is present at N276. The tract at residues 323–355 is disordered; it reads TFEAPPLGTQPDCNPTPENGEAPASTSPTQSLL. N336 carries N-linked (GlcNAc...) asparagine glycosylation. Positions 346–355 are enriched in polar residues; it reads ASTSPTQSLL. The helical transmembrane segment at 386–406 threads the bilayer; the sequence is PVLFWVILVLVVVVGSSAFLL. At 407 to 595 the chain is on the cytoplasmic side; it reads CHRRACRKRI…DPLPTAASGK (189 aa). 2 positions are modified to phosphoserine: S438 and S452. Disordered regions lie at residues 438 to 457, 485 to 509, and 536 to 595; these read SRPRRSSTQLRSGASVTEPV, LQDASPAGGPSSPRDLPEPRVSTEH, and EGRG…ASGK. Residues 443 to 452 are compositionally biased toward polar residues; that stretch reads SSTQLRSGAS. Positions 499-509 are enriched in basic and acidic residues; sequence DLPEPRVSTEH.

The protein belongs to the TNFR8 family. As to quaternary structure, interacts with TRAF1, TRAF2, TRAF3 and TRAF5. Post-translationally, phosphorylated on serine and tyrosine residues. Isoform 2 is constitutively phosphorylated. In terms of tissue distribution, detected in alveolar macrophages (at protein level).

The protein resides in the cell membrane. It localises to the cytoplasm. Functionally, receptor for TNFSF8/CD30L. May play a role in the regulation of cellular growth and transformation of activated lymphoblasts. Regulates gene expression through activation of NF-kappa-B. The chain is Tumor necrosis factor receptor superfamily member 8 from Homo sapiens (Human).